Reading from the N-terminus, the 123-residue chain is MPTINQLIARPRVVQKSRKKVPALQQSPQKRGVCTRVYTTTPKKPNSALRKVAKVRLTNGFEVIGYIPGEGHNLQEHSVVMIRGGRVKDLPGVRYHILRGVLDTQGVKNRKQRRSKYGAKRPK.

At Asp-89 the chain carries 3-methylthioaspartic acid.

This sequence belongs to the universal ribosomal protein uS12 family. Part of the 30S ribosomal subunit. Contacts proteins S8 and S17. May interact with IF1 in the 30S initiation complex.

Functionally, with S4 and S5 plays an important role in translational accuracy. In terms of biological role, interacts with and stabilizes bases of the 16S rRNA that are involved in tRNA selection in the A site and with the mRNA backbone. Located at the interface of the 30S and 50S subunits, it traverses the body of the 30S subunit contacting proteins on the other side and probably holding the rRNA structure together. The combined cluster of proteins S8, S12 and S17 appears to hold together the shoulder and platform of the 30S subunit. This is Small ribosomal subunit protein uS12 from Rhodopseudomonas palustris (strain HaA2).